Here is a 414-residue protein sequence, read N- to C-terminus: Ornithine aminotransferase (414 aa).

A disulfide bond links Cys-154 and Cys-163. Lys-262 carries the N6-(pyridoxal phosphate)lysine modification.

The protein belongs to the class-III pyridoxal-phosphate-dependent aminotransferase family. In terms of assembly, homodimer. The cofactor is pyridoxal 5'-phosphate. In terms of processing, the disulfide bond between Cys-154 and Cys-163 is reduced by TRX1 which increases OAT catalytic activity.

The protein localises to the cytoplasm. It catalyses the reaction a 2-oxocarboxylate + L-ornithine = L-glutamate 5-semialdehyde + an L-alpha-amino acid. It carries out the reaction L-ornithine + 2-oxoglutarate = L-glutamate 5-semialdehyde + L-glutamate. It participates in amino-acid biosynthesis; L-proline biosynthesis; L-glutamate 5-semialdehyde from L-ornithine: step 1/1. Unlike for mammalian OATs, activity is increased by TRX1-mediated reduction of the disulfide bond between Cys-154 and Cys-163. Binding to TRX1 may also induce conformational changes that facilitate substrate binding. Its function is as follows. The enzyme has a very narrow substrate specificity and can only catalyze the transamination of alpha-ketoglutarate with ornithine or N-acetylornithine and, to a lesser extent, of glutamate-5-semialdehyde with glutamate and alanine. In Plasmodium falciparum (isolate 3D7), this protein is Ornithine aminotransferase.